We begin with the raw amino-acid sequence, 469 residues long: Calcium-binding mitochondrial carrier protein SCaMC-2 (469 aa).

Topologically, residues 1-189 (MLCLCLYVPL…ERQTGMWWRH (189 aa)) are mitochondrial intermembrane. EF-hand domains follow at residues 47-80 (TYRQWKQKIVQAGDKDLDGQLDFEEFVHYLQDHE), 78-113 (DHEKKLRLVFKSLDKKNDGRIDAQEIMQSLRDLGVK), and 114-149 (ISEQQAEKILKSMDKNGTMTIDWNEWRDYHLLHPVE). Residues Asp60, Asp62, Asp64, Gln66, and Glu71 each coordinate Ca(2+). 3 Solcar repeats span residues 184–270 (GMWW…IKRL), 278–363 (LRIH…LKNA), and 375–463 (PGVF…LKIT). A helical membrane pass occupies residues 190–207 (LVAGGGAGAVSRTCTAPL). Residues 208–244 (DRLKVLMQVHASRSNNMCIVGGFTQMIREGGARSLWR) lie on the Mitochondrial matrix side of the membrane. Residues 245–264 (GNGINVLKIAPESAIKFMAY) traverse the membrane as a helical segment. Residues 265–287 (EQIKRLIGSDQETLRIHERLVAG) are Mitochondrial intermembrane-facing. The chain crosses the membrane as a helical span at residues 288 to 301 (SLAGAIAQSSIYPM). The Mitochondrial matrix portion of the chain corresponds to 302 to 337 (EVLKTRMALRKTGQYSGMLDCARKILAREGMAAFYK). Residues 338-357 (GYVPNMLGIIPYAGIDLAVY) form a helical membrane-spanning segment. Over 358–380 (ETLKNAWLQRYAVNSADPGVFVL) the chain is Mitochondrial intermembrane. A helical membrane pass occupies residues 381 to 398 (LACGTMSSTCGQLASYPL). Topologically, residues 399–437 (ALVRTRMQAQASMEGAPEVTMSSLFKQILRTEGAFGLYR) are mitochondrial matrix. Residues 438–457 (GLAPNFMKVIPAVSISYVVY) traverse the membrane as a helical segment. At 458–469 (ENLKITLGVQSR) the chain is on the mitochondrial intermembrane side.

Belongs to the mitochondrial carrier (TC 2.A.29) family.

Its subcellular location is the mitochondrion inner membrane. Functionally, calcium-dependent mitochondrial solute carrier. Mitochondrial solute carriers shuttle metabolites, nucleotides, and cofactors through the mitochondrial inner membrane. May act as a ATP-Mg/Pi exchanger that mediates the transport of Mg-ATP in exchange for phosphate, catalyzing the net uptake or efflux of adenine nucleotides into or from the mitochondria. The protein is Calcium-binding mitochondrial carrier protein SCaMC-2 (SLC25A25) of Bos taurus (Bovine).